Consider the following 400-residue polypeptide: S-adenosylmethionine decarboxylase proenzyme (400 aa).

Residues Glu18 and Glu21 contribute to the active site. Catalysis depends on Ser78, which acts as the Schiff-base intermediate with substrate; via pyruvic acid. The residue at position 78 (Ser78) is a Pyruvic acid (Ser); by autocatalysis. Cys92 serves as the catalytic Proton donor; for catalytic activity. Residues Ser243 and His256 each act as proton acceptor; for processing activity in the active site.

This sequence belongs to the eukaryotic AdoMetDC family. The cofactor is pyruvate. Post-translationally, is synthesized initially as an inactive proenzyme. Formation of the active enzyme involves a self-maturation process in which the active site pyruvoyl group is generated from an internal serine residue via an autocatalytic post-translational modification. Two non-identical subunits are generated from the proenzyme in this reaction, and the pyruvate is formed at the N-terminus of the alpha chain, which is derived from the carboxyl end of the proenzyme. The post-translation cleavage follows an unusual pathway, termed non-hydrolytic serinolysis, in which the side chain hydroxyl group of the serine supplies its oxygen atom to form the C-terminus of the beta chain, while the remainder of the serine residue undergoes an oxidative deamination to produce ammonia and the pyruvoyl group blocking the N-terminus of the alpha chain.

It catalyses the reaction S-adenosyl-L-methionine + H(+) = S-adenosyl 3-(methylsulfanyl)propylamine + CO2. It participates in amine and polyamine biosynthesis; S-adenosylmethioninamine biosynthesis; S-adenosylmethioninamine from S-adenosyl-L-methionine: step 1/1. This is S-adenosylmethionine decarboxylase proenzyme (SAMDC) from Zea mays (Maize).